The following is a 55-amino-acid chain: Large ribosomal subunit protein bL33 (55 aa).

It belongs to the bacterial ribosomal protein bL33 family.

The protein is Large ribosomal subunit protein bL33 of Rhizobium johnstonii (strain DSM 114642 / LMG 32736 / 3841) (Rhizobium leguminosarum bv. viciae).